Here is a 128-residue protein sequence, read N- to C-terminus: Large ribosomal subunit protein eL8 (128 aa).

This sequence belongs to the eukaryotic ribosomal protein eL8 family. In terms of assembly, part of the 50S ribosomal subunit. Probably part of the RNase P complex.

Its subcellular location is the cytoplasm. Its function is as follows. Multifunctional RNA-binding protein that recognizes the K-turn motif in ribosomal RNA, the RNA component of RNase P, box H/ACA, box C/D and box C'/D' sRNAs. The sequence is that of Large ribosomal subunit protein eL8 from Ignicoccus hospitalis (strain KIN4/I / DSM 18386 / JCM 14125).